Consider the following 235-residue polypeptide: tRNA (guanine-N(1)-)-methyltransferase (235 aa).

S-adenosyl-L-methionine-binding positions include Gly-112 and 132-137; that span reads IGDYVL.

The protein belongs to the RNA methyltransferase TrmD family. As to quaternary structure, homodimer.

The protein localises to the cytoplasm. The catalysed reaction is guanosine(37) in tRNA + S-adenosyl-L-methionine = N(1)-methylguanosine(37) in tRNA + S-adenosyl-L-homocysteine + H(+). Functionally, specifically methylates guanosine-37 in various tRNAs. The chain is tRNA (guanine-N(1)-)-methyltransferase from Cytophaga hutchinsonii (strain ATCC 33406 / DSM 1761 / CIP 103989 / NBRC 15051 / NCIMB 9469 / D465).